A 387-amino-acid polypeptide reads, in one-letter code: Cytochrome b (387 aa).

The next 4 membrane-spanning stretches (helical) occupy residues 32–52 (FGSLLACVLVVQIVTGILLAC), 76–98 (FLLRALHANGASFFFIFLYLHIG), 113–133 (TWNIGVIIFLLTIITAFLGYC), and 179–199 (FFSLHYLMPFVIAALSIMHLI). 2 residues coordinate heme b: His82 and His96. Residues His183 and His197 each contribute to the heme b site. His202 is a binding site for a ubiquinone. Transmembrane regions (helical) follow at residues 225–245 (FLIKDLITIFIFLLAINYMVF), 289–309 (QLGVVAMLLSILVLLLLPLLD), 321–341 (MGKFFFWCFVADFCILAWIGG), and 348–368 (FITIGAYATAFYFIYFFILIP).

Belongs to the cytochrome b family. In terms of assembly, fungal cytochrome b-c1 complex contains 10 subunits; 3 respiratory subunits, 2 core proteins and 5 low-molecular weight proteins. Cytochrome b-c1 complex is a homodimer. It depends on heme b as a cofactor.

It localises to the mitochondrion inner membrane. In terms of biological role, component of the ubiquinol-cytochrome c reductase complex (complex III or cytochrome b-c1 complex) that is part of the mitochondrial respiratory chain. The b-c1 complex mediates electron transfer from ubiquinol to cytochrome c. Contributes to the generation of a proton gradient across the mitochondrial membrane that is then used for ATP synthesis. In Schizosaccharomyces octosporus (Fission yeast), this protein is Cytochrome b (cob).